The chain runs to 509 residues: Metal transporter Nramp3 (509 aa).

Positions 1–12 are enriched in low complexity; sequence MPQLENNEPLLI. The disordered stretch occupies residues 1 to 25; sequence MPQLENNEPLLINEEEEEETAYDET. Positions 13–23 are enriched in acidic residues; it reads NEEEEEETAYD. Transmembrane regions (helical) follow at residues 56–76, 84–104, 133–153, 165–185, 193–213, 239–259, 285–305, 327–347, 383–403, 406–426, 444–464, and 472–492; these read LWLF…PGNL, AVAG…GLLV, MVLW…EVIG, ILPL…FLFL, LEAV…WMFG, AVGV…SALV, IALF…AKGF, YGGG…AAGQ, IIPT…LDVL, WLNV…LCLV, IAWL…LEFF, and VYTG…LYLI.

It belongs to the NRAMP (TC 2.A.55) family. Expressed in vascular tissues.

It localises to the vacuole membrane. In terms of biological role, vacuolar metal transporter involved in intracellular metal homeostasis. Can transport iron (Fe), manganese (Mn) and cadmium (Cd). Regulates metal accumulation under Fe starvation. Acts redundantly with NRAMP4 to mobilize vacuolar Fe and provide sufficient Fe during seed germination. In association with NRAMP4, required for optimal growth and photosynthesis under Mn deficiency. Exports Mn from vacuoles in leaf mesophyll cells, making Mn available for functional photosystem II in chloroplasts. Involved in basal resistance to the bacterial pathogen E.chrysanthemi. This Arabidopsis thaliana (Mouse-ear cress) protein is Metal transporter Nramp3 (NRAMP3).